The sequence spans 158 residues: Nuclear cap-binding protein subunit 2 (158 aa).

MRNA is bound by residues Tyr17, Tyr40, 109–113 (RADWD), 120–124 (RQYGR), and 130–131 (QV). An RRM domain is found at 37-115 (CTLYVGNLSY…RVIRADWDAG (79 aa)). The interval 123–158 (GRGKHGGQVRDEYRKDYDPERGGYNRAIAQKGGDRQ) is disordered. Basic and acidic residues predominate over residues 130 to 145 (QVRDEYRKDYDPERGG).

This sequence belongs to the RRM NCBP2 family. As to quaternary structure, component of the nuclear cap-binding complex (CBC), a heterodimer composed of ncbp-1 and ncbp-2 that interacts with m7GpppG-capped RNA.

It is found in the nucleus. Component of the cap-binding complex (CBC), which binds co-transcriptionally to the 5' cap of pre-mRNAs and is involved in various processes such as pre-mRNA splicing and RNA-mediated gene silencing (RNAi). The CBC complex is involved in miRNA-mediated RNA interference and is required for primary microRNAs (miRNAs) processing. In the CBC complex, ncbp-2 recognizes and binds capped RNAs (m7GpppG-capped RNA) but requires ncbp-1 to stabilize the movement of its N-terminal loop and lock the CBC into a high affinity cap-binding state with the cap structure. The protein is Nuclear cap-binding protein subunit 2 (ncbp-2) of Caenorhabditis elegans.